We begin with the raw amino-acid sequence, 227 residues long: Pre-hexon-linking protein VIII (227 aa).

A Phosphothreonine; by host modification is found at threonine 64. Residues 112-157 (FRHRVRSPGQGITHLKIRGRGIQLNDESVSSSLGLRPDGTFQIGGA) constitute a propeptide that is removed on maturation. Phosphoserine; by host occurs at positions 118 and 174.

This sequence belongs to the adenoviridae hexon-linking protein family. As to quaternary structure, interacts with the peripentonal hexons as well as the hexons in the facets. Part of a complex composed of the core-capsid bridging protein, the endosome lysis protein VI and the hexon-linking protein VIII; these interactions bridge the virus core to the capsid. In terms of processing, cleaved by the viral protease during virion maturation. May cause the middle segment to be shed from the capsid.

It localises to the virion. The protein resides in the host nucleus. Functionally, structural component of the virion that acts as a cement protein on the capsid interior and which glue the peripentonal hexons and group-of-nine hexons together. The sequence is that of Pre-hexon-linking protein VIII from Homo sapiens (Human).